The sequence spans 364 residues: tRNA N6-adenosine threonylcarbamoyltransferase (364 aa).

Residues His-115 and His-119 each coordinate Fe cation. Residues 137–141 (LVSGG), Asp-170, Gly-183, and Asn-288 contribute to the substrate site. Residue Asp-316 coordinates Fe cation.

The protein belongs to the KAE1 / TsaD family. Fe(2+) is required as a cofactor.

It localises to the cytoplasm. It carries out the reaction L-threonylcarbamoyladenylate + adenosine(37) in tRNA = N(6)-L-threonylcarbamoyladenosine(37) in tRNA + AMP + H(+). Required for the formation of a threonylcarbamoyl group on adenosine at position 37 (t(6)A37) in tRNAs that read codons beginning with adenine. Is involved in the transfer of the threonylcarbamoyl moiety of threonylcarbamoyl-AMP (TC-AMP) to the N6 group of A37, together with TsaE and TsaB. TsaD likely plays a direct catalytic role in this reaction. This Bartonella tribocorum (strain CIP 105476 / IBS 506) protein is tRNA N6-adenosine threonylcarbamoyltransferase.